Consider the following 844-residue polypeptide: DNA mismatch repair protein MutS (844 aa).

Position 610–617 (610–617 (GPNMGGKS)) interacts with ATP.

The protein belongs to the DNA mismatch repair MutS family.

Its function is as follows. This protein is involved in the repair of mismatches in DNA. It is possible that it carries out the mismatch recognition step. This protein has a weak ATPase activity. The polypeptide is DNA mismatch repair protein MutS (Francisella tularensis subsp. mediasiatica (strain FSC147)).